The primary structure comprises 531 residues: MGVPSEGAVGNVNGNEVGTTASFAGYMETRGVREARVLASELCRHMYTLGWFSGTGGSITIKVHDDSIPKPRQLVVISPSGVQKERMVPEDMYVLSSDGFILSTPPLKPYPHKPPKCTDCTPLFMKVYEMRDAGAVIHSHGMESCIVTMILPFSKEFRITHMEMIKGIKGHGYHDELVVPIIENTAHEAELVESLTEAITAYPKTTAVLVRNHGVYVWGDSWISAKTQAECYHYLFDAAIKLHQLGLDWSTPTHGPIRSINGIWGCNGTMSRGLKVGGLSLDDMIEPSQRCILLDIEGTTTPISFVTDVLFPYAHANVGKHLAATFDSEETQDDINLLRSQIQHDLEHGVVGAVPIPPDYVGKELVIASFVANVEAMIRADRNITALKQLQGHIWKTGFQSNELVGVVFDDVPEALERWHASGIKVYIYSSGSREAQQLIFSNSNYGDLRKYFCGFFDTTMGNKKETHSYFEILRTVGIDRPSDMLFVTDVFQEAVAARAAGLEVVISIRPGNGPLPENHGFRTIETFLEI.

Residues 1-248 form a methylthioribulose-1-phosphate dehydratase region; it reads MGVPSEGAVG…AIKLHQLGLD (248 aa). C120 provides a ligand contact to substrate. Zn(2+) contacts are provided by H138 and H140. The Proton donor/acceptor; for methylthioribulose-1-phosphate dehydratase activity role is filled by E163. Position 213 (H213) interacts with Zn(2+). The enolase-phosphatase E1 stretch occupies residues 292 to 531; that stretch reads ILLDIEGTTT…FRTIETFLEI (240 aa). Mg(2+) contacts are provided by D295 and E297. Substrate-binding positions include 430-431 and K464; that span reads SS. Residue D490 participates in Mg(2+) binding.

It in the N-terminal section; belongs to the aldolase class II family. MtnB subfamily. The protein in the C-terminal section; belongs to the HAD-like hydrolase superfamily. MasA/MtnC family. The cofactor is Zn(2+). Mg(2+) serves as cofactor.

The catalysed reaction is 5-(methylsulfanyl)-D-ribulose 1-phosphate = 5-methylsulfanyl-2,3-dioxopentyl phosphate + H2O. It catalyses the reaction 5-methylsulfanyl-2,3-dioxopentyl phosphate + H2O = 1,2-dihydroxy-5-(methylsulfanyl)pent-1-en-3-one + phosphate. The protein operates within amino-acid biosynthesis; L-methionine biosynthesis via salvage pathway; L-methionine from S-methyl-5-thio-alpha-D-ribose 1-phosphate: step 2/6. It functions in the pathway amino-acid biosynthesis; L-methionine biosynthesis via salvage pathway; L-methionine from S-methyl-5-thio-alpha-D-ribose 1-phosphate: step 3/6. It participates in amino-acid biosynthesis; L-methionine biosynthesis via salvage pathway; L-methionine from S-methyl-5-thio-alpha-D-ribose 1-phosphate: step 4/6. In Vitis vinifera (Grape), this protein is Probable bifunctional methylthioribulose-1-phosphate dehydratase/enolase-phosphatase E1 2.